Consider the following 441-residue polypeptide: Synaptotagmin-1 (441 aa).

Residues 1-69 (MVKLDFSSQD…DVVKEKVMQQ (69 aa)) are Vesicular-facing. A helical transmembrane segment spans residues 70–96 (TGMPEWAFVFLGFVFILLVLACAFCLI). Topologically, residues 97–441 (RKLFGKKRHG…EEGDKKDDKK (345 aa)) are cytoplasmic. C2 domains are found at residues 159 to 278 (KLGR…EEWK) and 292 to 425 (SLGD…AQWH). Asp-190, Asp-196, Asp-248, Phe-249, Asp-250, Ser-253, Lys-254, Asp-256, Asp-323, Asp-329, Asp-383, Asp-385, and Asp-391 together coordinate Ca(2+).

Belongs to the synaptotagmin family. The cofactor is Ca(2+). As to expression, localized to regions known to be rich in synapses and appears to be associated with synaptic vesicles. Also found in some non-neuronal secretory structures.

It localises to the cytoplasmic vesicle. The protein localises to the secretory vesicle. The protein resides in the synaptic vesicle membrane. Its subcellular location is the synapse. May have a regulatory role in the membrane interactions during trafficking of synaptic vesicles at the active zone of the synapse. It binds acidic phospholipids with a specificity that requires the presence of both an acidic head group and a diacyl backbone. Involved in necrotic cell death. This chain is Synaptotagmin-1 (snt-1), found in Caenorhabditis elegans.